The sequence spans 294 residues: Ribosomal RNA small subunit methyltransferase I (294 aa).

This sequence belongs to the methyltransferase superfamily. RsmI family.

It localises to the cytoplasm. The enzyme catalyses cytidine(1402) in 16S rRNA + S-adenosyl-L-methionine = 2'-O-methylcytidine(1402) in 16S rRNA + S-adenosyl-L-homocysteine + H(+). Functionally, catalyzes the 2'-O-methylation of the ribose of cytidine 1402 (C1402) in 16S rRNA. This Mesorhizobium japonicum (strain LMG 29417 / CECT 9101 / MAFF 303099) (Mesorhizobium loti (strain MAFF 303099)) protein is Ribosomal RNA small subunit methyltransferase I.